The primary structure comprises 397 residues: Cathepsin E (397 aa).

A signal peptide spans 1–16; it reads MKQFLVVLLILSFVHG. The propeptide at 17–49 is activation peptide; it reads IIRVPLKRQKSMRKILKEKGKLSHLWTKQGNEF. One can recognise a Peptidase A1 domain in the interval 74-385; sequence YFGQISIGTP…DRGNNRVGFA (312 aa). The active site involves Asp-92. A disulfide bond links Cys-105 and Cys-110. Asn-139 is a glycosylation site (N-linked (GlcNAc...) asparagine). Cys-268 and Cys-272 are disulfide-bonded. The active site involves Asp-277. The cysteines at positions 310 and 344 are disulfide-linked.

It belongs to the peptidase A1 family. As to quaternary structure, homodimer; disulfide-linked. In terms of processing, glycosylated. Contains high mannose-type oligosaccharide. As to expression, found in the larval foregut and adult stomach.

The protein resides in the endosome. The enzyme catalyses Similar to cathepsin D, but slightly broader specificity.. In terms of biological role, may have a role in immune function. Probably involved in the processing of antigenic peptides during MHC class II-mediated antigen presentation. The protein is Cathepsin E (CTSE) of Aquarana catesbeiana (American bullfrog).